A 387-amino-acid polypeptide reads, in one-letter code: Alanine racemase (387 aa).

Residue Lys38 is the Proton acceptor; specific for D-alanine of the active site. Lys38 carries the N6-(pyridoxal phosphate)lysine modification. Arg136 lines the substrate pocket. Residue Tyr267 is the Proton acceptor; specific for L-alanine of the active site. Met316 provides a ligand contact to substrate.

Belongs to the alanine racemase family. It depends on pyridoxal 5'-phosphate as a cofactor.

It carries out the reaction L-alanine = D-alanine. Its pathway is amino-acid biosynthesis; D-alanine biosynthesis; D-alanine from L-alanine: step 1/1. In terms of biological role, catalyzes the interconversion of L-alanine and D-alanine. May also act on other amino acids. This Clostridium tetani (strain Massachusetts / E88) protein is Alanine racemase (alr).